Consider the following 999-residue polypeptide: Multiple C2 and transmembrane domain-containing protein 1 (999 aa).

Residues Met-1–Ser-19 are compositionally biased toward low complexity. The tract at residues Met-1–Lys-241 is disordered. The span at Arg-34–Gly-44 shows a compositional bias: gly residues. A compositionally biased stretch (low complexity) spans Gly-65–Ser-79. Residues Phe-92 to Cys-101 show a composition bias toward polar residues. Low complexity-rich tracts occupy residues Pro-131 to Gly-141 and Gly-149 to Ser-169. Basic and acidic residues-rich tracts occupy residues Arg-175 to Arg-185 and Arg-228 to Ser-238. C2 domains are found at residues Ile-242 to Leu-360, Gln-452 to Leu-569, and Gln-603 to Leu-724. Positions 277, 283, 330, 332, 338, 486, 492, 539, 541, 547, 642, 648, 694, 696, and 702 each coordinate Ca(2+). The next 2 membrane-spanning stretches (helical) occupy residues Phe-811–Leu-831 and Pro-914–Ile-934.

Belongs to the MCTP family. Requires Ca(2+) as cofactor.

Its subcellular location is the cytoplasmic vesicle. The protein resides in the secretory vesicle. The protein localises to the synaptic vesicle membrane. It is found in the recycling endosome. It localises to the endoplasmic reticulum membrane. In terms of biological role, calcium sensor which is essential for the stabilization of normal baseline neurotransmitter release and for the induction and long-term maintenance of presynaptic homeostatic plasticity. The polypeptide is Multiple C2 and transmembrane domain-containing protein 1 (MCTP1) (Homo sapiens (Human)).